The following is a 150-amino-acid chain: Large ribosomal subunit protein uL15 (150 aa).

Residues 1 to 55 (MADNEILQMHDLKPAPGAKKDRTRVGRGEGSKGKTAGRGAKGQTKRNHVRPGFEG) form a disordered region. Residues 8–32 (QMHDLKPAPGAKKDRTRVGRGEGSK) show a composition bias toward basic and acidic residues.

It belongs to the universal ribosomal protein uL15 family. As to quaternary structure, part of the 50S ribosomal subunit.

Functionally, binds to the 23S rRNA. The chain is Large ribosomal subunit protein uL15 from Bifidobacterium longum (strain DJO10A).